Consider the following 458-residue polypeptide: Serine protease Do-like HtrB (458 aa).

Basic and acidic residues predominate over residues 1-18; that stretch reads MDYRRDGQNDQHQTEPSH. The tract at residues 1 to 42 is disordered; that stretch reads MDYRRDGQNDQHQTEPSHTEQQNTENQKLIGHSEQELLDAPV. Residues 1–71 are Cytoplasmic-facing; the sequence is MDYRRDGQND…TAVKKEKKRR (71 aa). The chain crosses the membrane as a helical span at residues 72–92; that stretch reads AAWLSPILGGIIGGGLMLGIA. At 93–458 the chain is on the extracellular side; it reads PYLPSDQNQA…LTKQTESSSS (366 aa). The interval 146-170 is disordered; the sequence is QTSQNNTFGTGGGSSSESESGTGSG. Catalysis depends on charge relay system residues H187, D217, and S298. Residues 296–298 and 352–356 contribute to the substrate site; these read GNS and LGVQM. A PDZ domain is found at 356 to 440; that stretch reads MIDMSQVPET…KTTIQVLRKG (85 aa).

Belongs to the peptidase S1C family.

The protein localises to the cell membrane. It catalyses the reaction Acts on substrates that are at least partially unfolded. The cleavage site P1 residue is normally between a pair of hydrophobic residues, such as Val-|-Val.. Degrades abnormal exported proteins and responsible for the propeptide processing of a natural pro-protein and for the maturation of a native protein. It also plays a prominent role in stress (heat shock, ethanol, puromycin and NaCl) resistance during active exponential growth. This is Serine protease Do-like HtrB (htrB) from Bacillus subtilis (strain 168).